Here is a 314-residue protein sequence, read N- to C-terminus: 4-hydroxy-3-methylbut-2-enyl diphosphate reductase (314 aa).

Cys12 provides a ligand contact to [4Fe-4S] cluster. (2E)-4-hydroxy-3-methylbut-2-enyl diphosphate contacts are provided by His41 and His74. 2 residues coordinate dimethylallyl diphosphate: His41 and His74. 2 residues coordinate isopentenyl diphosphate: His41 and His74. Position 96 (Cys96) interacts with [4Fe-4S] cluster. His124 is a binding site for (2E)-4-hydroxy-3-methylbut-2-enyl diphosphate. Residue His124 coordinates dimethylallyl diphosphate. His124 lines the isopentenyl diphosphate pocket. Glu126 acts as the Proton donor in catalysis. (2E)-4-hydroxy-3-methylbut-2-enyl diphosphate is bound at residue Thr167. Residue Cys197 coordinates [4Fe-4S] cluster. (2E)-4-hydroxy-3-methylbut-2-enyl diphosphate contacts are provided by Ser225, Ser226, Asn227, and Ser269. Dimethylallyl diphosphate contacts are provided by Ser225, Ser226, Asn227, and Ser269. The isopentenyl diphosphate site is built by Ser225, Ser226, Asn227, and Ser269.

The protein belongs to the IspH family. The cofactor is [4Fe-4S] cluster.

The catalysed reaction is isopentenyl diphosphate + 2 oxidized [2Fe-2S]-[ferredoxin] + H2O = (2E)-4-hydroxy-3-methylbut-2-enyl diphosphate + 2 reduced [2Fe-2S]-[ferredoxin] + 2 H(+). It carries out the reaction dimethylallyl diphosphate + 2 oxidized [2Fe-2S]-[ferredoxin] + H2O = (2E)-4-hydroxy-3-methylbut-2-enyl diphosphate + 2 reduced [2Fe-2S]-[ferredoxin] + 2 H(+). The protein operates within isoprenoid biosynthesis; dimethylallyl diphosphate biosynthesis; dimethylallyl diphosphate from (2E)-4-hydroxy-3-methylbutenyl diphosphate: step 1/1. It functions in the pathway isoprenoid biosynthesis; isopentenyl diphosphate biosynthesis via DXP pathway; isopentenyl diphosphate from 1-deoxy-D-xylulose 5-phosphate: step 6/6. In terms of biological role, catalyzes the conversion of 1-hydroxy-2-methyl-2-(E)-butenyl 4-diphosphate (HMBPP) into a mixture of isopentenyl diphosphate (IPP) and dimethylallyl diphosphate (DMAPP). Acts in the terminal step of the DOXP/MEP pathway for isoprenoid precursor biosynthesis. This Actinobacillus pleuropneumoniae serotype 7 (strain AP76) protein is 4-hydroxy-3-methylbut-2-enyl diphosphate reductase.